The following is a 184-amino-acid chain: Large ribosomal subunit protein uL6 (184 aa).

It belongs to the universal ribosomal protein uL6 family. Part of the 50S ribosomal subunit.

Functionally, this protein binds to the 23S rRNA, and is important in its secondary structure. It is located near the subunit interface in the base of the L7/L12 stalk, and near the tRNA binding site of the peptidyltransferase center. The sequence is that of Large ribosomal subunit protein uL6 from Thermococcus kodakarensis (strain ATCC BAA-918 / JCM 12380 / KOD1) (Pyrococcus kodakaraensis (strain KOD1)).